A 223-amino-acid chain; its full sequence is UPF0173 metal-dependent hydrolase TV0864 (223 aa).

This sequence belongs to the UPF0173 family.

The polypeptide is UPF0173 metal-dependent hydrolase TV0864 (Thermoplasma volcanium (strain ATCC 51530 / DSM 4299 / JCM 9571 / NBRC 15438 / GSS1)).